The sequence spans 195 residues: Imidazoleglycerol-phosphate dehydratase (195 aa).

This sequence belongs to the imidazoleglycerol-phosphate dehydratase family.

The protein localises to the cytoplasm. It carries out the reaction D-erythro-1-(imidazol-4-yl)glycerol 3-phosphate = 3-(imidazol-4-yl)-2-oxopropyl phosphate + H2O. It participates in amino-acid biosynthesis; L-histidine biosynthesis; L-histidine from 5-phospho-alpha-D-ribose 1-diphosphate: step 6/9. The polypeptide is Imidazoleglycerol-phosphate dehydratase (Cereibacter sphaeroides (strain ATCC 17025 / ATH 2.4.3) (Rhodobacter sphaeroides)).